The primary structure comprises 318 residues: Aspartate carbamoyltransferase catalytic subunit (318 aa).

Residues R58 and T59 each contribute to the carbamoyl phosphate site. K86 contacts L-aspartate. Carbamoyl phosphate-binding residues include R108, H141, and Q144. L-aspartate is bound by residues R174 and R226. Residues G270 and P271 each contribute to the carbamoyl phosphate site.

The protein belongs to the aspartate/ornithine carbamoyltransferase superfamily. ATCase family. As to quaternary structure, heterododecamer (2C3:3R2) of six catalytic PyrB chains organized as two trimers (C3), and six regulatory PyrI chains organized as three dimers (R2).

It catalyses the reaction carbamoyl phosphate + L-aspartate = N-carbamoyl-L-aspartate + phosphate + H(+). The protein operates within pyrimidine metabolism; UMP biosynthesis via de novo pathway; (S)-dihydroorotate from bicarbonate: step 2/3. In terms of biological role, catalyzes the condensation of carbamoyl phosphate and aspartate to form carbamoyl aspartate and inorganic phosphate, the committed step in the de novo pyrimidine nucleotide biosynthesis pathway. This Lactobacillus gasseri (strain ATCC 33323 / DSM 20243 / BCRC 14619 / CIP 102991 / JCM 1131 / KCTC 3163 / NCIMB 11718 / NCTC 13722 / AM63) protein is Aspartate carbamoyltransferase catalytic subunit.